Here is a 293-residue protein sequence, read N- to C-terminus: Small ribosomal subunit biogenesis GTPase RsgA (293 aa).

One can recognise a CP-type G domain in the interval 63–223 (KNQLNRPPIA…VADTPGFSSL (161 aa)). GTP is bound by residues 112-115 (SKTD) and 166-174 (GQSGVGKSS). Zn(2+) is bound by residues cysteine 247, cysteine 252, histidine 254, and cysteine 260.

Belongs to the TRAFAC class YlqF/YawG GTPase family. RsgA subfamily. In terms of assembly, monomer. Associates with 30S ribosomal subunit, binds 16S rRNA. Requires Zn(2+) as cofactor.

The protein resides in the cytoplasm. Functionally, one of several proteins that assist in the late maturation steps of the functional core of the 30S ribosomal subunit. Helps release RbfA from mature subunits. May play a role in the assembly of ribosomal proteins into the subunit. Circularly permuted GTPase that catalyzes slow GTP hydrolysis, GTPase activity is stimulated by the 30S ribosomal subunit. The sequence is that of Small ribosomal subunit biogenesis GTPase RsgA from Shouchella clausii (strain KSM-K16) (Alkalihalobacillus clausii).